The chain runs to 35 residues: Kappa-theraphotoxin-Tb1b (35 aa).

Cystine bridges form between Cys-3/Cys-18, Cys-10/Cys-23, and Cys-17/Cys-30.

This sequence belongs to the neurotoxin 10 (Hwtx-1) family. 58 subfamily. Monomer. Expressed by the venom gland.

It is found in the secreted. Low-affinity blocker of Kv4.2/KCND2 voltage-gated potassium channels. Is presumed to shift the voltage-dependence of channel activation to more depolarized potentials and to bind to the S3-S4 linker region of the voltage sensor domain. This chain is Kappa-theraphotoxin-Tb1b, found in Theraphosa blondi (Goliath birdeating spider).